Here is a 360-residue protein sequence, read N- to C-terminus: uncharacterized protein (360 aa).

Residues methionine 1 to arginine 33 are disordered.

This sequence belongs to the herpesviridae US22 family.

This is an uncharacterized protein from Human cytomegalovirus (strain AD169) (HHV-5).